A 600-amino-acid chain; its full sequence is MHRAAAVDTTPKIVFYYKCLLNKNWNEPINNIFWGEFFLLQPRLEVLSQLLRECPKQELTVNGPKFHSMYLYISEILKSKAESLRIRNSLATLQTFLAELSVRKPTDVNFTIFLLLGNIDSIDIQFSAFIKNLCQLVKDSEDVQSVEISLRFVLHFVSFLYNSSFISHIYGNYDVFSTLYTVILKRKFGFETAVYAIGLLSACDKFETVNTFRLGLSKIVDEEFFSSVLSSSAQQLISLRDFYVSIKPDNPLTGSFFNLFSLRSSSNNPDSDQESQFSRLPDERATMFFTIYELCCCNKLFLKKLVEGGEKNGEAPLEALLSLLSYINTHQRQSERSHHFSILSLILFHIIIDDRSLLYRLTDKKFKISVRVCSQRYPYPPNATKPATPLGYMLDICCIGIQHNMKLNLSATMYFLYFSFVYRAMTSLVQDGIRMEYHWLELWRVLFSFLDFVSVLINTSPTEDVTRLLELILDVLAYIISNGDALVIRSDELVDLFYKLLHSSKNFSSFSSKIPDERLGALNYLLEVTEYLTSKTVDLPRSTADEVESVIKLELESIPVAKQNAFGGVPPFKESQYRLFHKRASRGMADLLRRKSEAAN.

The next 2 membrane-spanning stretches (helical) occupy residues 409–429 (LSATMYFLYFSFVYRAMTSLV) and 437–457 (YHWLELWRVLFSFLDFVSVLI).

Belongs to the UPF0588 family.

It is found in the membrane. The sequence is that of UPF0588 membrane protein C20F10.02c from Schizosaccharomyces pombe (strain 972 / ATCC 24843) (Fission yeast).